The primary structure comprises 237 residues: Uridylate kinase (237 aa).

Residue 11–14 (KLSG) participates in ATP binding. UMP is bound at residue Gly53. ATP-binding residues include Gly54 and Arg58. Residues Asp73 and 134–141 (TGNPFFTT) contribute to the UMP site. Residues Thr161, Tyr167, and Asp170 each contribute to the ATP site.

It belongs to the UMP kinase family. In terms of assembly, homohexamer.

It is found in the cytoplasm. It catalyses the reaction UMP + ATP = UDP + ADP. The protein operates within pyrimidine metabolism; CTP biosynthesis via de novo pathway; UDP from UMP (UMPK route): step 1/1. Its activity is regulated as follows. Inhibited by UTP. Catalyzes the reversible phosphorylation of UMP to UDP. In Burkholderia thailandensis (strain ATCC 700388 / DSM 13276 / CCUG 48851 / CIP 106301 / E264), this protein is Uridylate kinase.